The primary structure comprises 432 residues: Adenylosuccinate synthetase (432 aa).

GTP contacts are provided by residues G13–K19 and G41–T43. D14 (proton acceptor) is an active-site residue. Residues D14 and G41 each contribute to the Mg(2+) site. IMP is bound by residues D14–K17, N39–H42, T130, R144, Q225, T240, and R304. Catalysis depends on H42, which acts as the Proton donor. Position 300-306 (A300–R306) interacts with substrate. Residues R306, K332–D334, and S415–G417 each bind GTP.

This sequence belongs to the adenylosuccinate synthetase family. In terms of assembly, homodimer. Mg(2+) serves as cofactor.

It is found in the cytoplasm. It catalyses the reaction IMP + L-aspartate + GTP = N(6)-(1,2-dicarboxyethyl)-AMP + GDP + phosphate + 2 H(+). Its pathway is purine metabolism; AMP biosynthesis via de novo pathway; AMP from IMP: step 1/2. In terms of biological role, plays an important role in the de novo pathway of purine nucleotide biosynthesis. Catalyzes the first committed step in the biosynthesis of AMP from IMP. The protein is Adenylosuccinate synthetase of Proteus mirabilis (strain HI4320).